Reading from the N-terminus, the 161-residue chain is MPSFDIVSEVDKQEVRNAIDQVNKEVSTRFDFKGSDARVEQSDYALTVYADTDFQLDQVQDILSQKLSKRGVDVKCLDTGNVEKVSGNKVKRSVTVKTGVGTELAKKIVKCIKDSKLKVQASIQGETVRVSGAKRDVLQETIALVKKSVSDFPLQYQNFRD.

It belongs to the YajQ family.

Functionally, nucleotide-binding protein. The polypeptide is Nucleotide-binding protein Tbd_1846 (Thiobacillus denitrificans (strain ATCC 25259 / T1)).